Here is a 314-residue protein sequence, read N- to C-terminus: Testis-specific Y-encoded protein 4 (314 aa).

This sequence belongs to the nucleosome assembly protein (NAP) family.

The protein localises to the cytoplasm. It is found in the nucleus. In terms of biological role, may be involved in sperm differentiation and proliferation. This is Testis-specific Y-encoded protein 4 (TSPY4) from Homo sapiens (Human).